Here is a 382-residue protein sequence, read N- to C-terminus: S-adenosylmethionine synthase (382 aa).

ATP is bound at residue H15. A Mg(2+)-binding site is contributed by D17. Position 43 (E43) interacts with K(+). Residues E56 and Q99 each coordinate L-methionine. Positions 99 to 109 (QSPDINQGVDR) are flexible loop. Residues 164-166 (DAK), 230-231 (RF), D239, 245-246 (RK), A262, and K266 each bind ATP. D239 contributes to the L-methionine binding site. Residue K270 participates in L-methionine binding.

It belongs to the AdoMet synthase family. In terms of assembly, homotetramer; dimer of dimers. The cofactor is Mg(2+). Requires K(+) as cofactor.

The protein resides in the cytoplasm. It catalyses the reaction L-methionine + ATP + H2O = S-adenosyl-L-methionine + phosphate + diphosphate. The protein operates within amino-acid biosynthesis; S-adenosyl-L-methionine biosynthesis; S-adenosyl-L-methionine from L-methionine: step 1/1. Functionally, catalyzes the formation of S-adenosylmethionine (AdoMet) from methionine and ATP. The overall synthetic reaction is composed of two sequential steps, AdoMet formation and the subsequent tripolyphosphate hydrolysis which occurs prior to release of AdoMet from the enzyme. The polypeptide is S-adenosylmethionine synthase (Psychromonas ingrahamii (strain DSM 17664 / CCUG 51855 / 37)).